The sequence spans 303 residues: Nod factor export ATP-binding protein I (303 aa).

The 231-residue stretch at 5 to 235 (LQMRNVRKLY…EIGCDVVEVY (231 aa)) folds into the ABC transporter domain. 37 to 44 (GPNGAGKT) provides a ligand contact to ATP.

It belongs to the ABC transporter superfamily. Lipooligosaccharide exporter (TC 3.A.1.102) family. As to quaternary structure, the complex is composed of two ATP-binding proteins (NodI) and two transmembrane proteins (NodJ).

It localises to the cell inner membrane. Functionally, part of the ABC transporter complex NodIJ involved in the export of the nodulation factors (Nod factors), the bacterial signal molecules that induce symbiosis and subsequent nodulation induction. Nod factors are LCO (lipo-chitin oligosaccharide), a modified beta-1,4-linked N-acetylglucosamine oligosaccharide. This subunit is responsible for energy coupling to the transport system. The polypeptide is Nod factor export ATP-binding protein I (Cupriavidus metallidurans (strain ATCC 43123 / DSM 2839 / NBRC 102507 / CH34) (Ralstonia metallidurans)).